A 240-amino-acid chain; its full sequence is Ubiquinone biosynthesis O-methyltransferase (240 aa).

S-adenosyl-L-methionine contacts are provided by Arg-44, Gly-64, Asp-85, and Met-129.

The protein belongs to the methyltransferase superfamily. UbiG/COQ3 family.

The enzyme catalyses a 3-demethylubiquinol + S-adenosyl-L-methionine = a ubiquinol + S-adenosyl-L-homocysteine + H(+). It catalyses the reaction a 3-(all-trans-polyprenyl)benzene-1,2-diol + S-adenosyl-L-methionine = a 2-methoxy-6-(all-trans-polyprenyl)phenol + S-adenosyl-L-homocysteine + H(+). It functions in the pathway cofactor biosynthesis; ubiquinone biosynthesis. In terms of biological role, O-methyltransferase that catalyzes the 2 O-methylation steps in the ubiquinone biosynthetic pathway. The sequence is that of Ubiquinone biosynthesis O-methyltransferase from Escherichia coli O6:K15:H31 (strain 536 / UPEC).